We begin with the raw amino-acid sequence, 185 residues long: Probable host range protein 2 (185 aa).

The protein belongs to the poxviridae C7 protein family.

Plays a role for multiplication of the virus in different cell types. The protein is Probable host range protein 2 of Swinepox virus (strain Kasza) (SWPV).